The following is a 347-amino-acid chain: MNKELISEIPLLEDKAVSEIENAASLKDLEKVRLSYLGRKGVVKAYFDDLKNIDDAGEKRDLGAVINVLRNKIDQLITSKENELKDKEVKLKLQNEAVDITLPVRPERIGKIHPLSKVISEVKLIFAHMGFKAVDGPDIEDEFHVFDALNTPSHHPAREEQDTFYLRNKINDKRMVLRTHTSSVQIRTMEKTKTFPIKIVAAGRVYRNDFDATHTPMFHQIEGLYVNENVNMGQLKFTIHCFLSKFFGDKGLRIRFRNSFFPFTEPSAEVDISYKDSKWIEVLGCGMVHPNVFKNVGIDHTKYSGFAFGIGIERLAMLKYQISDLRSFYDNRVSWLNHYGFHFSSLR.

Position 265 (glutamate 265) interacts with Mg(2+).

The protein belongs to the class-II aminoacyl-tRNA synthetase family. Phe-tRNA synthetase alpha subunit type 1 subfamily. Tetramer of two alpha and two beta subunits. Mg(2+) serves as cofactor.

It is found in the cytoplasm. It carries out the reaction tRNA(Phe) + L-phenylalanine + ATP = L-phenylalanyl-tRNA(Phe) + AMP + diphosphate + H(+). In Wolbachia pipientis subsp. Culex pipiens (strain wPip), this protein is Phenylalanine--tRNA ligase alpha subunit.